Reading from the N-terminus, the 303-residue chain is N-acetylmuramic acid 6-phosphate etherase (303 aa).

The region spanning 61–224 (IVQAFQQGGR…TTASMILLGK (164 aa)) is the SIS domain. Catalysis depends on E89, which acts as the Proton donor. The active site involves E120.

The protein belongs to the GCKR-like family. MurNAc-6-P etherase subfamily. As to quaternary structure, homodimer.

It catalyses the reaction N-acetyl-D-muramate 6-phosphate + H2O = N-acetyl-D-glucosamine 6-phosphate + (R)-lactate. The protein operates within amino-sugar metabolism; 1,6-anhydro-N-acetylmuramate degradation. Its pathway is amino-sugar metabolism; N-acetylmuramate degradation. It functions in the pathway cell wall biogenesis; peptidoglycan recycling. Specifically catalyzes the cleavage of the D-lactyl ether substituent of MurNAc 6-phosphate, producing GlcNAc 6-phosphate and D-lactate. Together with AnmK, is also required for the utilization of anhydro-N-acetylmuramic acid (anhMurNAc) either imported from the medium or derived from its own cell wall murein, and thus plays a role in cell wall recycling. This is N-acetylmuramic acid 6-phosphate etherase (murQ) from Haemophilus influenzae (strain ATCC 51907 / DSM 11121 / KW20 / Rd).